The chain runs to 251 residues: Probable transcriptional regulatory protein cauri_1421 (251 aa).

Positions 1 to 21 (MAGHSKWATTKHKKAANDAKR) are disordered.

This sequence belongs to the TACO1 family.

It is found in the cytoplasm. The polypeptide is Probable transcriptional regulatory protein cauri_1421 (Corynebacterium aurimucosum (strain ATCC 700975 / DSM 44827 / CIP 107346 / CN-1) (Corynebacterium nigricans)).